The chain runs to 346 residues: Small ribosomal subunit biogenesis GTPase RsgA 1 (346 aa).

In terms of domain architecture, CP-type G spans 93–248; that stretch reads EEQLIAANFD…IIDTPGMREF (156 aa). Residues 138–141 and 190–198 contribute to the GTP site; these read TKAD and GSSGVGKSS. Residues cysteine 271, cysteine 276, histidine 278, and cysteine 284 each contribute to the Zn(2+) site.

Belongs to the TRAFAC class YlqF/YawG GTPase family. RsgA subfamily. In terms of assembly, monomer. Associates with 30S ribosomal subunit, binds 16S rRNA. It depends on Zn(2+) as a cofactor.

It localises to the cytoplasm. In terms of biological role, one of several proteins that assist in the late maturation steps of the functional core of the 30S ribosomal subunit. Helps release RbfA from mature subunits. May play a role in the assembly of ribosomal proteins into the subunit. Circularly permuted GTPase that catalyzes slow GTP hydrolysis, GTPase activity is stimulated by the 30S ribosomal subunit. This is Small ribosomal subunit biogenesis GTPase RsgA 1 from Listeria innocua serovar 6a (strain ATCC BAA-680 / CLIP 11262).